A 359-amino-acid chain; its full sequence is DNA replication and repair protein RecF (359 aa).

30–37 (GANGSGKT) contributes to the ATP binding site.

This sequence belongs to the RecF family.

Its subcellular location is the cytoplasm. The RecF protein is involved in DNA metabolism; it is required for DNA replication and normal SOS inducibility. RecF binds preferentially to single-stranded, linear DNA. It also seems to bind ATP. The sequence is that of DNA replication and repair protein RecF from Vibrio atlanticus (strain LGP32) (Vibrio splendidus (strain Mel32)).